A 432-amino-acid polypeptide reads, in one-letter code: D-amino acid dehydrogenase (432 aa).

3-17 is an FAD binding site; the sequence is VVILGSGVVGVASAW.

Belongs to the DadA oxidoreductase family. Requires FAD as cofactor.

The catalysed reaction is a D-alpha-amino acid + A + H2O = a 2-oxocarboxylate + AH2 + NH4(+). The protein operates within amino-acid degradation; D-alanine degradation; NH(3) and pyruvate from D-alanine: step 1/1. Its function is as follows. Oxidative deamination of D-amino acids. In Escherichia coli O45:K1 (strain S88 / ExPEC), this protein is D-amino acid dehydrogenase.